The sequence spans 405 residues: Acetate kinase (405 aa).

Residue asparagine 7 participates in Mg(2+) binding. Lysine 14 is a binding site for ATP. A substrate-binding site is contributed by arginine 99. Aspartate 156 serves as the catalytic Proton donor/acceptor. 215 to 219 (HLGNG) provides a ligand contact to ATP. Glutamate 391 lines the Mg(2+) pocket.

Belongs to the acetokinase family. As to quaternary structure, homodimer. Mg(2+) is required as a cofactor. Requires Mn(2+) as cofactor.

The protein localises to the cytoplasm. It carries out the reaction acetate + ATP = acetyl phosphate + ADP. It functions in the pathway metabolic intermediate biosynthesis; acetyl-CoA biosynthesis; acetyl-CoA from acetate: step 1/2. Catalyzes the formation of acetyl phosphate from acetate and ATP. Can also catalyze the reverse reaction. The sequence is that of Acetate kinase from Trichormus variabilis (strain ATCC 29413 / PCC 7937) (Anabaena variabilis).